The sequence spans 344 residues: Dihydroorotate dehydrogenase (quinone) (344 aa).

FMN-binding positions include A65–K69 and T89. Position 69 (K69) interacts with substrate. A substrate-binding site is contributed by N114–F118. FMN contacts are provided by N145 and N178. Residue N178 coordinates substrate. S181 (nucleophile) is an active-site residue. N183 lines the substrate pocket. Residues K223 and T251 each coordinate FMN. A substrate-binding site is contributed by N252 to T253. FMN contacts are provided by residues G274, G303, and Y324–S325.

It belongs to the dihydroorotate dehydrogenase family. Type 2 subfamily. As to quaternary structure, monomer. FMN serves as cofactor.

It is found in the cell membrane. It carries out the reaction (S)-dihydroorotate + a quinone = orotate + a quinol. The protein operates within pyrimidine metabolism; UMP biosynthesis via de novo pathway; orotate from (S)-dihydroorotate (quinone route): step 1/1. Its function is as follows. Catalyzes the conversion of dihydroorotate to orotate with quinone as electron acceptor. This Cupriavidus pinatubonensis (strain JMP 134 / LMG 1197) (Cupriavidus necator (strain JMP 134)) protein is Dihydroorotate dehydrogenase (quinone).